Here is a 293-residue protein sequence, read N- to C-terminus: Meteorin (293 aa).

Residues 1–23 (MGFPAAALLCALCCGLLAPAARA) form the signal peptide. Intrachain disulfides connect C30/C51, C82/C118, C171/C242, C174/C266, and C184/C288.

Belongs to the meteorin family. As to quaternary structure, monomer.

It is found in the secreted. Involved in both glial cell differentiation and axonal network formation during neurogenesis. Promotes astrocyte differentiation and transforms cerebellar astrocytes into radial glia. Also induces axonal extension in small and intermediate neurons of sensory ganglia by activating nearby satellite glia. This Homo sapiens (Human) protein is Meteorin (METRN).